Consider the following 328-residue polypeptide: Malate dehydrogenase (328 aa).

Position 11 to 17 (Gly-11 to Gly-17) interacts with NAD(+). Positions 92 and 98 each coordinate substrate. Residues Asn-105, Gln-112, and Thr-129–Asn-131 contribute to the NAD(+) site. Residues Asn-131 and Arg-162 each contribute to the substrate site. The active-site Proton acceptor is the His-187.

The protein belongs to the LDH/MDH superfamily. MDH type 2 family.

It catalyses the reaction (S)-malate + NAD(+) = oxaloacetate + NADH + H(+). Functionally, catalyzes the reversible oxidation of malate to oxaloacetate. In Paenarthrobacter aurescens (strain TC1), this protein is Malate dehydrogenase.